We begin with the raw amino-acid sequence, 101 residues long: Urease subunit beta (101 aa).

It belongs to the urease beta subunit family. Heterotrimer of UreA (gamma), UreB (beta) and UreC (alpha) subunits. Three heterotrimers associate to form the active enzyme.

The protein localises to the cytoplasm. The catalysed reaction is urea + 2 H2O + H(+) = hydrogencarbonate + 2 NH4(+). Its pathway is nitrogen metabolism; urea degradation; CO(2) and NH(3) from urea (urease route): step 1/1. The protein is Urease subunit beta of Bradyrhizobium diazoefficiens (strain JCM 10833 / BCRC 13528 / IAM 13628 / NBRC 14792 / USDA 110).